The sequence spans 448 residues: 26S proteasome regulatory subunit 4 homolog (448 aa).

Residues 1–10 (MGQAQSGNFS) are compositionally biased toward polar residues. Residues 1–58 (MGQAQSGNFSNFGDGANGDNKKDQKKDKPKYEPPVPTRTGRRKKKAQSGPDASAKLPT) are disordered. Residues 19 to 31 (DNKKDQKKDKPKY) are compositionally biased toward basic and acidic residues. 232-239 (GAPGTGKT) provides a ligand contact to ATP.

The protein belongs to the AAA ATPase family.

The protein resides in the cytoplasm. The protein localises to the nucleus. In terms of biological role, the 26S proteasome is involved in the ATP-dependent degradation of ubiquitinated proteins. The regulatory (or ATPase) complex confers ATP dependency and substrate specificity to the 26S complex. The polypeptide is 26S proteasome regulatory subunit 4 homolog (mts2) (Schizosaccharomyces pombe (strain 972 / ATCC 24843) (Fission yeast)).